We begin with the raw amino-acid sequence, 596 residues long: Bromodomain-containing protein 9 (596 aa).

Residues 1–10 show a composition bias toward basic residues; it reads MGKKHKKHKS. Disordered regions lie at residues 1-31 and 49-119; these read MGKK…QYYV and EVTE…SEGE. Residues 61 to 73 show a composition bias toward basic and acidic residues; that stretch reads SFYEDRSDHERER. Residues 74 to 84 are compositionally biased toward basic residues; the sequence is HKEKKKKKKKK. Basic and acidic residues predominate over residues 85 to 98; sequence SEKEKDKYLDEDER. Residues 99–109 show a composition bias toward basic residues; it reads RRRKEEKKRKR. The Bromo domain occupies 148 to 252; sequence NESTPLQQLL…HTGFKMMSKQ (105 aa). Residues 226–228 are histone H4K5ac H4K8ac and histone H4K5bu H4K8bu binding; the sequence is TYN. The span at 537–547 shows a compositional bias: basic and acidic residues; it reads DFHDVHNDRGG. The interval 537–596 is disordered; it reads DFHDVHNDRGGSRPSSSSSVSNNSERDHHLGSPSRISVGEQQDIHDPYEFLQSPETENQN. The span at 548–559 shows a compositional bias: low complexity; that stretch reads SRPSSSSSVSNN.

As to quaternary structure, binds acetylated histones H3 and H4. Binds butyrylated histone H4.

It is found in the nucleus. Functionally, plays a role in chromatin remodeling and regulation of transcription. Acts as a chromatin reader that recognizes and binds acylated histones: binds histones that are acetylated and/or butyrylated. In Xenopus tropicalis (Western clawed frog), this protein is Bromodomain-containing protein 9 (brd9).